The primary structure comprises 348 residues: Inosamine-phosphate amidinotransferase 1 (348 aa).

Active-site residues include Asp179 and His227. Cys332 acts as the Amidino-cysteine intermediate in catalysis.

The protein belongs to the amidinotransferase family. As to quaternary structure, homodimer.

It carries out the reaction 1-amino-1-deoxy-scyllo-inositol 4-phosphate + L-arginine = 1-guanidino-1-deoxy-scyllo-inositol 4-phosphate + L-ornithine. The protein operates within antibiotic biosynthesis; streptomycin biosynthesis. In terms of biological role, catalyzes two non-consecutive transamidination reactions. It converts scyllo-inosamine 4-phosphate into N-amidino-scyllo-inosamine 4-phosphate and N1-amidinostreptamine 6-phosphate into streptidine 6-phosphate. In Streptomyces glaucescens, this protein is Inosamine-phosphate amidinotransferase 1 (strB1).